Consider the following 156-residue polypeptide: Ribosomal RNA large subunit methyltransferase H (156 aa).

S-adenosyl-L-methionine-binding positions include Leu73, Gly104, and 123–128; that span reads LSALTL.

This sequence belongs to the RNA methyltransferase RlmH family. Homodimer.

The protein localises to the cytoplasm. The catalysed reaction is pseudouridine(1915) in 23S rRNA + S-adenosyl-L-methionine = N(3)-methylpseudouridine(1915) in 23S rRNA + S-adenosyl-L-homocysteine + H(+). Specifically methylates the pseudouridine at position 1915 (m3Psi1915) in 23S rRNA. The chain is Ribosomal RNA large subunit methyltransferase H from Shewanella pealeana (strain ATCC 700345 / ANG-SQ1).